The following is a 174-amino-acid chain: Actin-related protein 2/3 complex subunit 3 (174 aa).

Belongs to the ARPC3 family. As to quaternary structure, component of the Arp2/3 complex composed of arp2, act2, arc1/p41-ARC, arc2/p34-ARC, arc3/p21-ARC, arc4/p20-ARC and arc5/p16-ARC.

It is found in the cytoplasm. The protein resides in the cytoskeleton. The protein localises to the actin patch. Functionally, functions as a component of the Arp2/3 complex which is involved in regulation of actin polymerization and together with an activating nucleation-promoting factor (NPF) mediates the formation of branched actin networks. In Schizosaccharomyces pombe (strain 972 / ATCC 24843) (Fission yeast), this protein is Actin-related protein 2/3 complex subunit 3 (arc3).